The following is an 82-amino-acid chain: Turripeptide IX-23 (82 aa).

A signal peptide spans 1 to 23; the sequence is MMAKLMITVMMVLLLSLQQGADG. A propeptide spanning residues 24-50 is cleaved from the precursor; that stretch reads RSERWRKNQMAASSIMRNLITARIDPP. 3 cysteine pairs are disulfide-bonded: Cys-53-Cys-68, Cys-58-Cys-72, and Cys-64-Cys-79.

This sequence belongs to the Pg turripeptide superfamily. In terms of tissue distribution, expressed by the venom duct.

It localises to the secreted. The protein is Turripeptide IX-23 of Gemmula speciosa (Splendid gem-turris).